The following is a 737-amino-acid chain: Relaxin receptor 2 (737 aa).

Residues 1–399 (MFPLLHFIVL…SSFEDLLANN (399 aa)) lie on the Extracellular side of the membrane. One can recognise an LDL-receptor class A domain in the interval 27-64 (LCQKGYFPCGNLTKCLPRAFHCDGVDDCGNGADEDNCG). 3 cysteine pairs are disulfide-bonded: C28–C41, C35–C54, and C48–C63. The N-linked (GlcNAc...) asparagine glycan is linked to N37. N121 carries an N-linked (GlcNAc...) asparagine glycan. LRR repeat units follow at residues 121-142 (NTTL…VFTK), 145-166 (QLKQ…AFFG), 169-190 (NLQI…VFKD), 193-214 (QLTW…LFTG), 217-238 (SLFF…MCAQ), 241-262 (QLNW…SFLS), 265-286 (SLTV…TFSS), 289-310 (NLGE…IFKD), 313-334 (LLQK…QFES), and 337-358 (QLQS…MFQP). An N-linked (GlcNAc...) asparagine glycan is attached at N257. N318 is a glycosylation site (N-linked (GlcNAc...) asparagine). N-linked (GlcNAc...) asparagine glycosylation is present at N361. The helical transmembrane segment at 400–420 (ILRIFVWVIAFITCFGNLFVI) threads the bilayer. Residues 421–438 (GMRSFIKAENTTHATSIK) are Cytoplasmic-facing. A helical membrane pass occupies residues 439-459 (ILCCADCLMGVYLFFIGFFDI). Topologically, residues 460–478 (KYRGQYQKYALLWMESLQC) are extracellular. A disulfide bond links C478 and C556. The chain crosses the membrane as a helical span at residues 479-501 (RLMGFLAMLSTEVSVLLLTYLTL). Residues 502–520 (EKFLAIVFPFSNIRPGKWQ) are Cytoplasmic-facing. A helical membrane pass occupies residues 521 to 541 (TMVILICIWIVGFLIAVIPFW). The Extracellular portion of the chain corresponds to 542 to 575 (KEDYFGNFYGKNGVCFPLYYDQTEDIGSKGYSLG). The helical transmembrane segment at 576-596 (IFLGVNLLAFLIIVFSYTIMF) threads the bilayer. Over 597–622 (CSIKKTALQTSEVRNPIGREVAVANR) the chain is Cytoplasmic. The chain crosses the membrane as a helical span at residues 623-643 (FFFIVFSDAICWIPVFVIKIL). The Extracellular portion of the chain corresponds to 644 to 653 (SLFRVEIPGT). Residues 654–674 (ITSWIVIFFLPVNSALNPILY) traverse the membrane as a helical segment. Residues 675–737 (TLTTSFFKDK…LGDSIVKPIS (63 aa)) lie on the Cytoplasmic side of the membrane.

This sequence belongs to the G-protein coupled receptor 1 family.

It is found in the cell membrane. Its function is as follows. Receptor for relaxin. The activity of this receptor is mediated by G proteins leading to stimulation of adenylate cyclase and an increase of cAMP. May also be a receptor for Leydig insulin-like peptide (INSL3). This Canis lupus familiaris (Dog) protein is Relaxin receptor 2 (RXFP2).